The primary structure comprises 142 residues: 3-hydroxyacyl-[acyl-carrier-protein] dehydratase FabZ (142 aa).

H47 is a catalytic residue.

It belongs to the thioester dehydratase family. FabZ subfamily.

Its subcellular location is the cytoplasm. The catalysed reaction is a (3R)-hydroxyacyl-[ACP] = a (2E)-enoyl-[ACP] + H2O. In terms of biological role, involved in unsaturated fatty acids biosynthesis. Catalyzes the dehydration of short chain beta-hydroxyacyl-ACPs and long chain saturated and unsaturated beta-hydroxyacyl-ACPs. The protein is 3-hydroxyacyl-[acyl-carrier-protein] dehydratase FabZ of Coxiella burnetii (strain RSA 331 / Henzerling II).